A 204-amino-acid chain; its full sequence is Probable chorismate pyruvate-lyase (204 aa).

Residues Arg78, Leu131, and Glu190 each coordinate substrate.

Belongs to the UbiC family.

It is found in the cytoplasm. The catalysed reaction is chorismate = 4-hydroxybenzoate + pyruvate. It participates in cofactor biosynthesis; ubiquinone biosynthesis. Removes the pyruvyl group from chorismate, with concomitant aromatization of the ring, to provide 4-hydroxybenzoate (4HB) for the ubiquinone pathway. The sequence is that of Probable chorismate pyruvate-lyase from Shewanella frigidimarina (strain NCIMB 400).